A 238-amino-acid polypeptide reads, in one-letter code: Ribonuclease PH (238 aa).

Phosphate is bound by residues Arg86 and 124–126 (GTR).

This sequence belongs to the RNase PH family. In terms of assembly, homohexameric ring arranged as a trimer of dimers.

It carries out the reaction tRNA(n+1) + phosphate = tRNA(n) + a ribonucleoside 5'-diphosphate. Phosphorolytic 3'-5' exoribonuclease that plays an important role in tRNA 3'-end maturation. Removes nucleotide residues following the 3'-CCA terminus of tRNAs; can also add nucleotides to the ends of RNA molecules by using nucleoside diphosphates as substrates, but this may not be physiologically important. Probably plays a role in initiation of 16S rRNA degradation (leading to ribosome degradation) during starvation. In Marinobacter nauticus (strain ATCC 700491 / DSM 11845 / VT8) (Marinobacter aquaeolei), this protein is Ribonuclease PH.